Consider the following 1162-residue polypeptide: DNA-directed RNA polymerase subunit beta (1162 aa).

This sequence belongs to the RNA polymerase beta chain family. In terms of assembly, the RNAP catalytic core consists of 2 alpha, 1 beta, 1 beta' and 1 omega subunit. When a sigma factor is associated with the core the holoenzyme is formed, which can initiate transcription.

The catalysed reaction is RNA(n) + a ribonucleoside 5'-triphosphate = RNA(n+1) + diphosphate. Its function is as follows. DNA-dependent RNA polymerase catalyzes the transcription of DNA into RNA using the four ribonucleoside triphosphates as substrates. The polypeptide is DNA-directed RNA polymerase subunit beta (Clavibacter michiganensis subsp. michiganensis (strain NCPPB 382)).